The sequence spans 119 residues: Large ribosomal subunit protein bL20 (119 aa).

The protein belongs to the bacterial ribosomal protein bL20 family.

In terms of biological role, binds directly to 23S ribosomal RNA and is necessary for the in vitro assembly process of the 50S ribosomal subunit. It is not involved in the protein synthesizing functions of that subunit. The protein is Large ribosomal subunit protein bL20 of Laribacter hongkongensis (strain HLHK9).